A 120-amino-acid polypeptide reads, in one-letter code: Succinate dehydrogenase assembly factor 3, mitochondrial (120 aa).

A mitochondrion-targeting transit peptide spans 1–36; that stretch reads MSRILMSQLTHPQRVRLLYKTILRLHRGLPAELRAL.

This sequence belongs to the complex I LYR family. SDHAF3 subfamily. Interacts with SdhB within an SdhA-SdhB subcomplex.

Its subcellular location is the mitochondrion matrix. Functionally, plays an essential role in the assembly of succinate dehydrogenase (SDH), an enzyme complex (also referred to as respiratory complex II) that is a component of both the tricarboxylic acid (TCA) cycle and the mitochondrial electron transport chain, and which couples the oxidation of succinate to fumarate with the reduction of ubiquinone (coenzyme Q) to ubiquinol. Promotes maturation of the iron-sulfur protein subunit SdhB of the SDH catalytic dimer, protecting it from the deleterious effects of oxidants. The chain is Succinate dehydrogenase assembly factor 3, mitochondrial from Drosophila melanogaster (Fruit fly).